Consider the following 378-residue polypeptide: Alanine racemase (378 aa).

The Proton acceptor; specific for D-alanine role is filled by lysine 40. The residue at position 40 (lysine 40) is an N6-(pyridoxal phosphate)lysine. Arginine 140 serves as a coordination point for substrate. Tyrosine 270 functions as the Proton acceptor; specific for L-alanine in the catalytic mechanism. Substrate is bound at residue methionine 317.

It belongs to the alanine racemase family. The cofactor is pyridoxal 5'-phosphate.

It catalyses the reaction L-alanine = D-alanine. It participates in amino-acid biosynthesis; D-alanine biosynthesis; D-alanine from L-alanine: step 1/1. Its function is as follows. Catalyzes the interconversion of L-alanine and D-alanine. May also act on other amino acids. The polypeptide is Alanine racemase (alr) (Lacticaseibacillus casei (strain BL23) (Lactobacillus casei)).